The sequence spans 141 residues: MPNQNLIALGFDFGMKRIGVAVGQTVTHSANAIAILKAQDGVPDWEKIKMLIETWHANVLVVGIPYNMDGSEQTLTFAARKFARKLQMRFGLPVSMVDERLTTIEAKRQWYEQGLTKRPQHLDNYAAKLILEQWLQEQKNE.

It belongs to the YqgF nuclease family.

It is found in the cytoplasm. Its function is as follows. Could be a nuclease involved in processing of the 5'-end of pre-16S rRNA. The chain is Putative pre-16S rRNA nuclease from Coxiella burnetii (strain RSA 331 / Henzerling II).